A 623-amino-acid polypeptide reads, in one-letter code: Pyranose 2-oxidase (623 aa).

An N-terminal signal peptide occupies residues 1 to 28 (MSTSSSDPFFNFAKSSFRSAAAQKASAS). A propeptide spanning residues 29–38 (SLPPLPGPDK) is cleaved from the precursor. A Tele-8alpha-FAD histidine modification is found at histidine 167. Residues glutamine 448 and histidine 450 each contribute to the substrate site. Residue histidine 548 is the Proton acceptor of the active site. Asparagine 593 is an active-site residue.

It belongs to the GMC oxidoreductase family. As to quaternary structure, homotetramer. The cofactor is FAD.

Its subcellular location is the periplasm. It carries out the reaction D-glucose + O2 = 2-dehydro-D-glucose + H2O2. Functionally, catalyzes the oxidation of various aldopyranoses and disaccharides on carbon-2 to the corresponding 2-keto sugars concomitant with the reduction of O(2) to H(2)O(2). Plays an important role in lignin degradation of wood rot fungi by supplying the essential cosubstrate H(2)O(2) for the ligninolytic peroxidases, lignin peroxidase and manganese-dependent peroxidase. The chain is Pyranose 2-oxidase (p2ox) from Peniophora sp. (strain SG) (White-rot fungus).